The following is a 75-amino-acid chain: ATP synthase subunit c (75 aa).

2 helical membrane passes run 4 to 24 and 54 to 74; these read GLIA…GLGQ and AVAE…MFAF.

Belongs to the ATPase C chain family. F-type ATPases have 2 components, F(1) - the catalytic core - and F(0) - the membrane proton channel. F(1) has five subunits: alpha(3), beta(3), gamma(1), delta(1), epsilon(1). F(0) has three main subunits: a(1), b(2) and c(10-14). The alpha and beta chains form an alternating ring which encloses part of the gamma chain. F(1) is attached to F(0) by a central stalk formed by the gamma and epsilon chains, while a peripheral stalk is formed by the delta and b chains.

It localises to the cell membrane. F(1)F(0) ATP synthase produces ATP from ADP in the presence of a proton or sodium gradient. F-type ATPases consist of two structural domains, F(1) containing the extramembraneous catalytic core and F(0) containing the membrane proton channel, linked together by a central stalk and a peripheral stalk. During catalysis, ATP synthesis in the catalytic domain of F(1) is coupled via a rotary mechanism of the central stalk subunits to proton translocation. In terms of biological role, key component of the F(0) channel; it plays a direct role in translocation across the membrane. A homomeric c-ring of between 10-14 subunits forms the central stalk rotor element with the F(1) delta and epsilon subunits. The polypeptide is ATP synthase subunit c (Mycoplasmopsis agalactiae (strain NCTC 10123 / CIP 59.7 / PG2) (Mycoplasma agalactiae)).